The chain runs to 517 residues: Nicotine N-demethylase CYP82E4 (517 aa).

A helical transmembrane segment spans residues 2-22; sequence LSPIEAIVGLVTFTFLFYFLW. A Glycyl lysine isopeptide (Lys-Gly) (interchain with G-Cter in ubiquitin) cross-link involves residue Lys-254. Residue Cys-457 participates in heme binding.

Belongs to the cytochrome P450 family. CYP82E2 subfamily. It depends on heme as a cofactor. As to expression, expressed in leaves.

Its subcellular location is the membrane. It carries out the reaction (S)-nicotine + reduced [NADPH--hemoprotein reductase] + O2 = (S)-nornicotine + formaldehyde + oxidized [NADPH--hemoprotein reductase] + H2O + H(+). It functions in the pathway alkaloid biosynthesis; nicotine biosynthesis. Functionally, involved in the biosynthesis of pyridine alkaloid natural products, leading mainly to the production of anabasine, anatabine, nicotine and nornicotine, effective deterrents against herbivores with antiparasitic and pesticide properties (neurotoxins); nornicotine serves as the precursor in the synthesis of the carcinogen compound N'-nitrosonornicotine (NNN). Catalyzes the demethylation of nicotine to form nornicotine. The protein is Nicotine N-demethylase CYP82E4 of Nicotiana tomentosiformis (Tobacco).